The chain runs to 64 residues: Ferredoxin-like protein in nif region (64 aa).

The 4Fe-4S ferredoxin-type domain maps to 2–30 (AFKIIASQCTQCGACEFECPSGAISFKTD). The [4Fe-4S] cluster site is built by Cys10, Cys13, Cys16, Cys20, Cys39, Cys42, Cys51, and Cys55.

The cofactor is [4Fe-4S] cluster.

This is Ferredoxin-like protein in nif region (fdxN) from Rhizobium leguminosarum bv. trifolii.